Here is a 286-residue protein sequence, read N- to C-terminus: Acetyl-coenzyme A carboxylase carboxyl transferase subunit beta (286 aa).

The region spanning Leu28–Lys286 is the CoA carboxyltransferase N-terminal domain. Zn(2+)-binding residues include Cys32, Cys35, Cys51, and Cys54. Residues Cys32–Cys54 form a C4-type zinc finger.

The protein belongs to the AccD/PCCB family. As to quaternary structure, acetyl-CoA carboxylase is a heterohexamer composed of biotin carboxyl carrier protein (AccB), biotin carboxylase (AccC) and two subunits each of ACCase subunit alpha (AccA) and ACCase subunit beta (AccD). It depends on Zn(2+) as a cofactor.

The protein localises to the cytoplasm. It catalyses the reaction N(6)-carboxybiotinyl-L-lysyl-[protein] + acetyl-CoA = N(6)-biotinyl-L-lysyl-[protein] + malonyl-CoA. The protein operates within lipid metabolism; malonyl-CoA biosynthesis; malonyl-CoA from acetyl-CoA: step 1/1. Component of the acetyl coenzyme A carboxylase (ACC) complex. Biotin carboxylase (BC) catalyzes the carboxylation of biotin on its carrier protein (BCCP) and then the CO(2) group is transferred by the transcarboxylase to acetyl-CoA to form malonyl-CoA. This is Acetyl-coenzyme A carboxylase carboxyl transferase subunit beta from Oceanobacillus iheyensis (strain DSM 14371 / CIP 107618 / JCM 11309 / KCTC 3954 / HTE831).